The sequence spans 391 residues: Digeranylgeranylglycerophospholipid reductase (391 aa).

Residues G18, E37, C48, A49, A51, R98, A122, D279, G291, and I292 each coordinate FAD.

Belongs to the geranylgeranyl reductase family. DGGGPL reductase subfamily. It depends on FAD as a cofactor.

The enzyme catalyses a 2,3-bis-O-phytanyl-sn-glycerol 1-phospholipid + 8 A = a 2,3-bis-O-(geranylgeranyl)-sn-glycerol 1-phospholipid + 8 AH2. It carries out the reaction 2,3-bis-O-(phytanyl)-sn-glycerol 1-phosphate + 8 A = 2,3-bis-O-(geranylgeranyl)-sn-glycerol 1-phosphate + 8 AH2. It catalyses the reaction CDP-2,3-bis-O-(geranylgeranyl)-sn-glycerol + 8 AH2 = CDP-2,3-bis-O-(phytanyl)-sn-glycerol + 8 A. The catalysed reaction is archaetidylserine + 8 AH2 = 2,3-bis-O-phytanyl-sn-glycero-3-phospho-L-serine + 8 A. Its pathway is membrane lipid metabolism; glycerophospholipid metabolism. Its function is as follows. Is involved in the reduction of 2,3-digeranylgeranylglycerophospholipids (unsaturated archaeols) into 2,3-diphytanylglycerophospholipids (saturated archaeols) in the biosynthesis of archaeal membrane lipids. Catalyzes the formation of archaetidic acid (2,3-di-O-phytanyl-sn-glyceryl phosphate) from 2,3-di-O-geranylgeranylglyceryl phosphate (DGGGP) via the hydrogenation of each double bond of the isoprenoid chains. Is also probably able to reduce double bonds of geranyl groups in CDP-2,3-bis-O-(geranylgeranyl)-sn-glycerol and archaetidylserine, thus acting at various stages in the biosynthesis of archaeal membrane lipids. This Methanocaldococcus jannaschii (strain ATCC 43067 / DSM 2661 / JAL-1 / JCM 10045 / NBRC 100440) (Methanococcus jannaschii) protein is Digeranylgeranylglycerophospholipid reductase.